The following is a 321-amino-acid chain: tRNA-dihydrouridine synthase B (321 aa).

FMN-binding positions include 16–18 (PMA) and glutamine 70. The active-site Proton donor is cysteine 100. FMN is bound by residues lysine 139, 200 to 202 (NGD), and 224 to 225 (GR).

Belongs to the Dus family. DusB subfamily. Requires FMN as cofactor.

The enzyme catalyses a 5,6-dihydrouridine in tRNA + NAD(+) = a uridine in tRNA + NADH + H(+). It carries out the reaction a 5,6-dihydrouridine in tRNA + NADP(+) = a uridine in tRNA + NADPH + H(+). Its function is as follows. Catalyzes the synthesis of 5,6-dihydrouridine (D), a modified base found in the D-loop of most tRNAs, via the reduction of the C5-C6 double bond in target uridines. The chain is tRNA-dihydrouridine synthase B from Escherichia coli O157:H7.